A 158-amino-acid polypeptide reads, in one-letter code: MTLKTIEGTFTAAKGRYALVVGRFNSFVVESLVQGAIDTLVRHGVEQSELTIIRVPGAFEIPLVAQKVAQRGEFDAIIALGAVIRGGTPHFEYVAGECTKGLAQVSLQFGVPVAFGVLTVDSIEQAIERSGTKAGNKGAEAALSALEMVSLMAALEAK.

5-amino-6-(D-ribitylamino)uracil-binding positions include F24, 58–60 (AFE), and 82–84 (AVI). 87–88 (GT) contacts (2S)-2-hydroxy-3-oxobutyl phosphate. The active-site Proton donor is the H90. F115 contacts 5-amino-6-(D-ribitylamino)uracil. R129 is a (2S)-2-hydroxy-3-oxobutyl phosphate binding site.

The protein belongs to the DMRL synthase family. Forms an icosahedral capsid composed of 60 subunits, arranged as a dodecamer of pentamers.

The enzyme catalyses (2S)-2-hydroxy-3-oxobutyl phosphate + 5-amino-6-(D-ribitylamino)uracil = 6,7-dimethyl-8-(1-D-ribityl)lumazine + phosphate + 2 H2O + H(+). It participates in cofactor biosynthesis; riboflavin biosynthesis; riboflavin from 2-hydroxy-3-oxobutyl phosphate and 5-amino-6-(D-ribitylamino)uracil: step 1/2. Catalyzes the formation of 6,7-dimethyl-8-ribityllumazine by condensation of 5-amino-6-(D-ribitylamino)uracil with 3,4-dihydroxy-2-butanone 4-phosphate. This is the penultimate step in the biosynthesis of riboflavin. The protein is 6,7-dimethyl-8-ribityllumazine synthase of Azotobacter vinelandii (strain DJ / ATCC BAA-1303).